Reading from the N-terminus, the 414-residue chain is tRNA(Ile)-lysidine synthase (414 aa).

An ATP-binding site is contributed by 17-22 (SGGCDS).

It belongs to the tRNA(Ile)-lysidine synthase family.

The protein localises to the cytoplasm. It catalyses the reaction cytidine(34) in tRNA(Ile2) + L-lysine + ATP = lysidine(34) in tRNA(Ile2) + AMP + diphosphate + H(+). In terms of biological role, ligates lysine onto the cytidine present at position 34 of the AUA codon-specific tRNA(Ile) that contains the anticodon CAU, in an ATP-dependent manner. Cytidine is converted to lysidine, thus changing the amino acid specificity of the tRNA from methionine to isoleucine. This is tRNA(Ile)-lysidine synthase from Exiguobacterium sibiricum (strain DSM 17290 / CCUG 55495 / CIP 109462 / JCM 13490 / 255-15).